We begin with the raw amino-acid sequence, 133 residues long: MEKTKLYECTVIIDGGLQDEAIAAAMEMVQKVITEKGGSISSVLEVGRRKTAYPINKKTIGYYAHIEFTAAAPVIGAIEKVLRYEEDLLRYLIIHLTSALLEMRKRVEKYSVVIGSPEDTAAAESDDSGKDAK.

This sequence belongs to the bacterial ribosomal protein bS6 family.

Its function is as follows. Binds together with bS18 to 16S ribosomal RNA. In Chlorobium limicola (strain DSM 245 / NBRC 103803 / 6330), this protein is Small ribosomal subunit protein bS6.